A 333-amino-acid polypeptide reads, in one-letter code: Methionyl-tRNA formyltransferase (333 aa).

(6S)-5,6,7,8-tetrahydrofolate is bound at residue 106–109; it reads SLLP.

It belongs to the Fmt family.

The catalysed reaction is L-methionyl-tRNA(fMet) + (6R)-10-formyltetrahydrofolate = N-formyl-L-methionyl-tRNA(fMet) + (6S)-5,6,7,8-tetrahydrofolate + H(+). Attaches a formyl group to the free amino group of methionyl-tRNA(fMet). The formyl group appears to play a dual role in the initiator identity of N-formylmethionyl-tRNA by promoting its recognition by IF2 and preventing the misappropriation of this tRNA by the elongation apparatus. This chain is Methionyl-tRNA formyltransferase, found in Elusimicrobium minutum (strain Pei191).